Here is a 343-residue protein sequence, read N- to C-terminus: Protein RecA (343 aa).

Glycine 65 to threonine 72 serves as a coordination point for ATP.

The protein belongs to the RecA family.

It localises to the cytoplasm. In terms of biological role, can catalyze the hydrolysis of ATP in the presence of single-stranded DNA, the ATP-dependent uptake of single-stranded DNA by duplex DNA, and the ATP-dependent hybridization of homologous single-stranded DNAs. It interacts with LexA causing its activation and leading to its autocatalytic cleavage. This is Protein RecA from Pseudoalteromonas atlantica (strain T6c / ATCC BAA-1087).